The sequence spans 336 residues: Ketol-acid reductoisomerase (NADP(+)) 1 (336 aa).

The 180-residue stretch at 2 to 181 (AKVYYEKDVT…GATRAGVLET (180 aa)) folds into the KARI N-terminal Rossmann domain. NADP(+) contacts are provided by residues 25-28 (YGSQ), Arg48, Ser52, and 82-85 (DELQ). His107 is a catalytic residue. Residue Gly133 coordinates NADP(+). The KARI C-terminal knotted domain occupies 182–327 (TFKEETETDL…RKLREMMPFV (146 aa)). Mg(2+) contacts are provided by Asp190, Glu194, Glu226, and Glu230. Residue Ser251 participates in substrate binding.

This sequence belongs to the ketol-acid reductoisomerase family. Mg(2+) serves as cofactor.

The enzyme catalyses (2R)-2,3-dihydroxy-3-methylbutanoate + NADP(+) = (2S)-2-acetolactate + NADPH + H(+). It carries out the reaction (2R,3R)-2,3-dihydroxy-3-methylpentanoate + NADP(+) = (S)-2-ethyl-2-hydroxy-3-oxobutanoate + NADPH + H(+). The protein operates within amino-acid biosynthesis; L-isoleucine biosynthesis; L-isoleucine from 2-oxobutanoate: step 2/4. Its pathway is amino-acid biosynthesis; L-valine biosynthesis; L-valine from pyruvate: step 2/4. Involved in the biosynthesis of branched-chain amino acids (BCAA). Catalyzes an alkyl-migration followed by a ketol-acid reduction of (S)-2-acetolactate (S2AL) to yield (R)-2,3-dihydroxy-isovalerate. In the isomerase reaction, S2AL is rearranged via a Mg-dependent methyl migration to produce 3-hydroxy-3-methyl-2-ketobutyrate (HMKB). In the reductase reaction, this 2-ketoacid undergoes a metal-dependent reduction by NADPH to yield (R)-2,3-dihydroxy-isovalerate. The protein is Ketol-acid reductoisomerase (NADP(+)) 1 of Bacillus thuringiensis subsp. konkukian (strain 97-27).